Consider the following 419-residue polypeptide: N-acylneuraminate cytidylyltransferase (419 aa).

This sequence belongs to the CMP-NeuNAc synthase family. As to quaternary structure, monomer. May form aggregates. The cofactor is Mg(2+). Mn(2+) serves as cofactor.

Its subcellular location is the cytoplasm. It catalyses the reaction an N-acylneuraminate + CTP = a CMP-N-acyl-beta-neuraminate + diphosphate. Inhibited by the CTP analogs 5-mercuri-CTP and CTP-2',3'-dialdehyde. Its function is as follows. Catalyzes the formation of CMP-N-acetylneuraminic acid (CMP-NeuNAc), which is essential for the formation of the capsule. This chain is N-acylneuraminate cytidylyltransferase (neuA), found in Escherichia coli O18:K1:H7 (strain RS218 / NMEC).